Reading from the N-terminus, the 229-residue chain is ATP-dependent dethiobiotin synthetase BioD (229 aa).

12-17 is a binding site for ATP; sequence GVGKTV. Thr16 contributes to the Mg(2+) binding site. Residue Lys37 is part of the active site. Thr41 is a binding site for substrate. ATP-binding positions include Asp53, 112-115, and 201-203; these read EGAG and PAG. The Mg(2+) site is built by Asp53 and Glu112.

The protein belongs to the dethiobiotin synthetase family. Homodimer. Requires Mg(2+) as cofactor.

The protein localises to the cytoplasm. The catalysed reaction is (7R,8S)-7,8-diammoniononanoate + CO2 + ATP = (4R,5S)-dethiobiotin + ADP + phosphate + 3 H(+). Its pathway is cofactor biosynthesis; biotin biosynthesis; biotin from 7,8-diaminononanoate: step 1/2. In terms of biological role, catalyzes a mechanistically unusual reaction, the ATP-dependent insertion of CO2 between the N7 and N8 nitrogen atoms of 7,8-diaminopelargonic acid (DAPA, also called 7,8-diammoniononanoate) to form a ureido ring. This Mycobacterium sp. (strain KMS) protein is ATP-dependent dethiobiotin synthetase BioD.